Reading from the N-terminus, the 66-residue chain is Large ribosomal subunit protein bL31 (66 aa).

Zn(2+) is bound by residues C16, C18, C36, and C39.

Belongs to the bacterial ribosomal protein bL31 family. Type A subfamily. As to quaternary structure, part of the 50S ribosomal subunit. Zn(2+) serves as cofactor.

Functionally, binds the 23S rRNA. The sequence is that of Large ribosomal subunit protein bL31 from Desulforamulus reducens (strain ATCC BAA-1160 / DSM 100696 / MI-1) (Desulfotomaculum reducens).